Consider the following 585-residue polypeptide: Amyloid protein-binding protein 2 (585 aa).

TPR repeat units lie at residues Q50 to F83, I120 to H153, A206 to G239, S288 to V321, H333 to I367, A429 to L462, A471 to L505, and E514 to R547.

In terms of assembly, component of a CRL2 E3 ubiquitin-protein ligase complex, also named ECS (Elongin BC-CUL2/5-SOCS-box protein) complex, composed of CUL2, Elongin BC (ELOB and ELOC), RBX1 and substrate-specific adapter APPBP2. Interacts with APP; APP interaction inhibits the E3 ubiquitin-protein ligase activity of the CRL2(APPBP2) complex. Post-translationally, rapidly degraded by the proteasome upon overexpression of a C-terminal fragment of APP.

The protein resides in the nucleus. It is found in the cytoplasm. The protein localises to the cytoskeleton. Its subcellular location is the membrane. It participates in protein modification; protein ubiquitination. E3 ubiquitin-protein ligase activity of the CRL2(APPBP2) complex is inhibited by APP. Substrate-recognition component of a Cul2-RING (CRL2) E3 ubiquitin-protein ligase complex of the DesCEND (destruction via C-end degrons) pathway, which recognizes a C-degron located at the extreme C terminus of target proteins, leading to their ubiquitination and degradation. The C-degron recognized by the DesCEND pathway is usually a motif of less than ten residues and can be present in full-length proteins, truncated proteins or proteolytically cleaved forms. The CRL2(APPBP2) complex specifically recognizes proteins with a -Arg-Xaa-Xaa-Gly degron at the C-terminus, leading to their ubiquitination and degradation. The CRL2(APPBP2) complex mediates ubiquitination and degradation of truncated SELENOV selenoproteins produced by failed UGA/Sec decoding, which end with a -Arg-Xaa-Xaa-Gly degron. May play a role in intracellular protein transport: may be involved in the translocation of APP along microtubules toward the cell surface. The chain is Amyloid protein-binding protein 2 from Mus musculus (Mouse).